A 234-amino-acid chain; its full sequence is Inosine triphosphate pyrophosphatase (234 aa).

11–16 (SGNKGK) is an ITP binding site. Glu40 provides a ligand contact to Mg(2+). Residues Lys53, 81–82 (DT), Lys98, 176–179 (FGWD), Lys203, and 208–209 (HR) contribute to the ITP site.

Belongs to the HAM1 NTPase family. Homodimer. Mg(2+) is required as a cofactor. Mn(2+) serves as cofactor.

It is found in the cytoplasm. The enzyme catalyses ITP + H2O = IMP + diphosphate + H(+). The catalysed reaction is dITP + H2O = dIMP + diphosphate + H(+). It catalyses the reaction XTP + H2O = XMP + diphosphate + H(+). Functionally, pyrophosphatase that hydrolyzes non-canonical purine nucleotides such as inosine triphosphate (ITP), deoxyinosine triphosphate (dITP) or xanthosine 5'-triphosphate (XTP) to their respective monophosphate derivatives. The enzyme does not distinguish between the deoxy- and ribose forms. Probably excludes non-canonical purines from RNA and DNA precursor pools, thus preventing their incorporation into RNA and DNA and avoiding chromosomal lesions. This Leishmania major protein is Inosine triphosphate pyrophosphatase.